Reading from the N-terminus, the 93-residue chain is Large ribosomal subunit protein uL23cz/uL23cy (93 aa).

The protein belongs to the universal ribosomal protein uL23 family. As to quaternary structure, part of the 50S ribosomal subunit.

It is found in the plastid. Its subcellular location is the chloroplast. In terms of biological role, binds to 23S rRNA. In Oryza nivara (Indian wild rice), this protein is Large ribosomal subunit protein uL23cz/uL23cy (rpl23-A).